Consider the following 504-residue polypeptide: uncharacterized protein (504 aa).

Residues asparagine 6–phenylalanine 26 form a helical membrane-spanning segment.

This sequence to M.jannaschii MJ1506 and MJ1561.

It is found in the membrane. This is an uncharacterized protein from Methanocaldococcus jannaschii (strain ATCC 43067 / DSM 2661 / JAL-1 / JCM 10045 / NBRC 100440) (Methanococcus jannaschii).